A 319-amino-acid chain; its full sequence is Acetyl-coenzyme A carboxylase carboxyl transferase subunit alpha (319 aa).

Residues 35-296 (DLEKEIKQLE…KQRLLEQLKE (262 aa)) enclose the CoA carboxyltransferase C-terminal domain.

Belongs to the AccA family. As to quaternary structure, acetyl-CoA carboxylase is a heterohexamer composed of biotin carboxyl carrier protein (AccB), biotin carboxylase (AccC) and two subunits each of ACCase subunit alpha (AccA) and ACCase subunit beta (AccD).

It is found in the cytoplasm. The catalysed reaction is N(6)-carboxybiotinyl-L-lysyl-[protein] + acetyl-CoA = N(6)-biotinyl-L-lysyl-[protein] + malonyl-CoA. It functions in the pathway lipid metabolism; malonyl-CoA biosynthesis; malonyl-CoA from acetyl-CoA: step 1/1. Component of the acetyl coenzyme A carboxylase (ACC) complex. First, biotin carboxylase catalyzes the carboxylation of biotin on its carrier protein (BCCP) and then the CO(2) group is transferred by the carboxyltransferase to acetyl-CoA to form malonyl-CoA. In Aliivibrio fischeri (strain ATCC 700601 / ES114) (Vibrio fischeri), this protein is Acetyl-coenzyme A carboxylase carboxyl transferase subunit alpha.